The chain runs to 393 residues: NAD(P)H-quinone oxidoreductase subunit H, chloroplastic (393 aa).

This sequence belongs to the complex I 49 kDa subunit family. NDH is composed of at least 16 different subunits, 5 of which are encoded in the nucleus.

The protein localises to the plastid. The protein resides in the chloroplast thylakoid membrane. The catalysed reaction is a plastoquinone + NADH + (n+1) H(+)(in) = a plastoquinol + NAD(+) + n H(+)(out). It catalyses the reaction a plastoquinone + NADPH + (n+1) H(+)(in) = a plastoquinol + NADP(+) + n H(+)(out). Functionally, NDH shuttles electrons from NAD(P)H:plastoquinone, via FMN and iron-sulfur (Fe-S) centers, to quinones in the photosynthetic chain and possibly in a chloroplast respiratory chain. The immediate electron acceptor for the enzyme in this species is believed to be plastoquinone. Couples the redox reaction to proton translocation, and thus conserves the redox energy in a proton gradient. In Solanum tuberosum (Potato), this protein is NAD(P)H-quinone oxidoreductase subunit H, chloroplastic.